The chain runs to 312 residues: Bifunctional pinoresinol-lariciresinol reductase 2 (312 aa).

NADP(+)-binding positions include Gly11 to Gly17, Arg36, and Lys45. Lys138 (proton acceptor) is an active-site residue. Arg142 is a binding site for NADP(+). His270 serves as a coordination point for substrate.

The protein belongs to the NmrA-type oxidoreductase family. Isoflavone reductase subfamily. Dimer.

The catalysed reaction is (+)-lariciresinol + NADP(+) = (+)-pinoresinol + NADPH + H(+). It carries out the reaction (-)-secoisolariciresinol + NADP(+) = (+)-lariciresinol + NADPH + H(+). It catalyses the reaction (-)-lariciresinol + NADP(+) = (-)-pinoresinol + NADPH + H(+). Functionally, reductase involved in lignan biosynthesis. Catalyzes the enantioselective sequential conversion of (+)-pinoresinol into (+)-lariciresinol and of (+)-lariciresinol into (-)-secoisolariciresinol. Can also convert with a lower efficiency (-)-pinoresinol into (-)-lariciresinol, but not (-)-lariciresinol into (+)-secoisolariciresinol. Abstracts the 4R-hydride from the NADPH cofactor during catalysis. The polypeptide is Bifunctional pinoresinol-lariciresinol reductase 2 (PLR_Tp2) (Thuja plicata (Western red-cedar)).